The chain runs to 176 residues: Small ribosomal subunit protein uS5 (176 aa).

The region spanning 15-78 (FEERIVEIRR…SAARRNVFEV (64 aa)) is the S5 DRBM domain.

The protein belongs to the universal ribosomal protein uS5 family. Part of the 30S ribosomal subunit. Contacts proteins S4 and S8.

In terms of biological role, with S4 and S12 plays an important role in translational accuracy. Its function is as follows. Located at the back of the 30S subunit body where it stabilizes the conformation of the head with respect to the body. This is Small ribosomal subunit protein uS5 from Thermosipho africanus (strain TCF52B).